The following is a 57-amino-acid chain: Large ribosomal subunit protein bL32 (57 aa).

Positions 1–19 are enriched in basic residues; that stretch reads MAVPKRRMSRSNTRSRRSQ. The interval 1 to 21 is disordered; it reads MAVPKRRMSRSNTRSRRSQWK.

This sequence belongs to the bacterial ribosomal protein bL32 family.

The protein is Large ribosomal subunit protein bL32 of Mycobacteroides abscessus (strain ATCC 19977 / DSM 44196 / CCUG 20993 / CIP 104536 / JCM 13569 / NCTC 13031 / TMC 1543 / L948) (Mycobacterium abscessus).